The primary structure comprises 431 residues: Glutamate-1-semialdehyde 2,1-aminomutase (431 aa).

K267 is subject to N6-(pyridoxal phosphate)lysine.

It belongs to the class-III pyridoxal-phosphate-dependent aminotransferase family. HemL subfamily. In terms of assembly, homodimer. It depends on pyridoxal 5'-phosphate as a cofactor.

It is found in the cytoplasm. The catalysed reaction is (S)-4-amino-5-oxopentanoate = 5-aminolevulinate. It participates in porphyrin-containing compound metabolism; protoporphyrin-IX biosynthesis; 5-aminolevulinate from L-glutamyl-tRNA(Glu): step 2/2. This chain is Glutamate-1-semialdehyde 2,1-aminomutase, found in Syntrophomonas wolfei subsp. wolfei (strain DSM 2245B / Goettingen).